The sequence spans 101 residues: Urease subunit beta (101 aa).

The protein belongs to the urease beta subunit family. In terms of assembly, heterotrimer of UreA (gamma), UreB (beta) and UreC (alpha) subunits. Three heterotrimers associate to form the active enzyme.

Its subcellular location is the cytoplasm. The catalysed reaction is urea + 2 H2O + H(+) = hydrogencarbonate + 2 NH4(+). It functions in the pathway nitrogen metabolism; urea degradation; CO(2) and NH(3) from urea (urease route): step 1/1. The polypeptide is Urease subunit beta (Burkholderia thailandensis (strain ATCC 700388 / DSM 13276 / CCUG 48851 / CIP 106301 / E264)).